The following is a 531-amino-acid chain: Peptide chain release factor 3 (531 aa).

Residues 10–278 (ARRRTFAIIS…DFVEHAPGPL (269 aa)) enclose the tr-type G domain. GTP-binding positions include 19-26 (SHPDAGKT), 87-91 (DTPGH), and 141-144 (NKLD).

Belongs to the TRAFAC class translation factor GTPase superfamily. Classic translation factor GTPase family. PrfC subfamily.

It is found in the cytoplasm. Its function is as follows. Increases the formation of ribosomal termination complexes and stimulates activities of RF-1 and RF-2. It binds guanine nucleotides and has strong preference for UGA stop codons. It may interact directly with the ribosome. The stimulation of RF-1 and RF-2 is significantly reduced by GTP and GDP, but not by GMP. The protein is Peptide chain release factor 3 of Thioalkalivibrio sulfidiphilus (strain HL-EbGR7).